The chain runs to 548 residues: MANSDSGDKEAHRSSKHGGWITLPFMLVTLLGMSITYFGWVMNLIVFLIEEFNIKSIAAVQISNIVNGVVNMLPVVAAILADSFFGNIPVISASAFISLTGISLLTLIASLDYLRPRPCETGSILCQSPSKLQLGILYAALALVITGTAGTRFILASAGANQYKKPKEQGRFFNWYFFTLYGGAITGTTAIVYAQDNASWKLGFGLCVAANLISFIIFVAGKRLYEHDQPLGSPYTSLVRVLVAATMKRKAVISYKDEDYHHRELEKETKTYVAMPSKSFRFLNRAALKTEGDSNNNMWRLCSVQEVEDFKAVLRLVPLWTSVMFLSAPLAVQMSMTVLQAMVMDRKLGPHFKVSAGSMQVIALVSGCVFIILNNWTTYPMYQKLIRKPLTPLQKVGIGHVLTILSMAISAVVEAKRLKTVENSHLMSVLWLVPALVINGIGEAFHFPANIAIFYGEFPESLRNTATSLTSVVMGISFYLSTALIDVIQRTTKWLPNDINHGRVDNVYLVLVIIGVSNFGYFLVCSWFYKYRNLKNDDHEQDLKDVTN.

Transmembrane regions (helical) follow at residues 29-49 (TLLGMSITYFGWVMNLIVFLI), 65-85 (IVNGVVNMLPVVAAILADSFF), 88-108 (IPVISASAFISLTGISLLTLI), 136-156 (ILYAALALVITGTAGTRFILA), 172-192 (FFNWYFFTLYGGAITGTTAIV), 200-220 (WKLGFGLCVAANLISFIIFVA), 316-336 (LVPLWTSVMFLSAPLAVQMSM), 354-374 (VSAGSMQVIALVSGCVFIILN), 393-413 (LQKVGIGHVLTILSMAISAVV), 429-449 (VLWLVPALVINGIGEAFHFPA), 468-488 (SLTSVVMGISFYLSTALIDVI), and 508-528 (YLVLVIIGVSNFGYFLVCSWF).

This sequence belongs to the major facilitator superfamily. Proton-dependent oligopeptide transporter (POT/PTR) (TC 2.A.17) family. As to expression, strongly expressed in the root stele.

Its subcellular location is the membrane. In terms of biological role, transporter involved in a passive nitrate efflux. In Arabidopsis thaliana (Mouse-ear cress), this protein is Protein NRT1/ PTR FAMILY 2.4 (NPF2.4).